Here is a 169-residue protein sequence, read N- to C-terminus: Crossover junction endodeoxyribonuclease RuvC (169 aa).

Active-site residues include Asp-15, Glu-75, and Asp-147. Mg(2+)-binding residues include Asp-15, Glu-75, and Asp-147.

The protein belongs to the RuvC family. In terms of assembly, homodimer which binds Holliday junction (HJ) DNA. The HJ becomes 2-fold symmetrical on binding to RuvC with unstacked arms; it has a different conformation from HJ DNA in complex with RuvA. In the full resolvosome a probable DNA-RuvA(4)-RuvB(12)-RuvC(2) complex forms which resolves the HJ. Requires Mg(2+) as cofactor.

Its subcellular location is the cytoplasm. It catalyses the reaction Endonucleolytic cleavage at a junction such as a reciprocal single-stranded crossover between two homologous DNA duplexes (Holliday junction).. In terms of biological role, the RuvA-RuvB-RuvC complex processes Holliday junction (HJ) DNA during genetic recombination and DNA repair. Endonuclease that resolves HJ intermediates. Cleaves cruciform DNA by making single-stranded nicks across the HJ at symmetrical positions within the homologous arms, yielding a 5'-phosphate and a 3'-hydroxyl group; requires a central core of homology in the junction. The consensus cleavage sequence is 5'-(A/T)TT(C/G)-3'. Cleavage occurs on the 3'-side of the TT dinucleotide at the point of strand exchange. HJ branch migration catalyzed by RuvA-RuvB allows RuvC to scan DNA until it finds its consensus sequence, where it cleaves and resolves the cruciform DNA. This Caulobacter vibrioides (strain ATCC 19089 / CIP 103742 / CB 15) (Caulobacter crescentus) protein is Crossover junction endodeoxyribonuclease RuvC.